Here is a 320-residue protein sequence, read N- to C-terminus: Ferrochelatase (320 aa).

2 residues coordinate Fe cation: histidine 194 and glutamate 275.

The protein belongs to the ferrochelatase family. Monomer.

The protein localises to the cytoplasm. It catalyses the reaction heme b + 2 H(+) = protoporphyrin IX + Fe(2+). Its pathway is porphyrin-containing compound metabolism; protoheme biosynthesis; protoheme from protoporphyrin-IX: step 1/1. Catalyzes the ferrous insertion into protoporphyrin IX. The polypeptide is Ferrochelatase (Escherichia coli O9:H4 (strain HS)).